A 365-amino-acid chain; its full sequence is MFEINPVNNRIQDLTERSDVLRGYLCYDAKKERLEEVNAELEQPDVWNEPERAQALGKERSSLEAVVDTLDQMKQGLEDVSGLLELAVEADDEETFNEAVAELDALEEKLAQLEFRRMFSGEYDSADCYLDIQAGSGGTEAQDWASMLERMYLRWAESRGFKTEIIEESEGEVAGIKSVTIKISGDYAYGWLRTETGVHRLVRKSPFDSGGRRHTSFSSAFVYPEVDDDIDIEINPADLRIDVYRASGAGGQHVNRTESAVRITHIPTGIVTQCQNDRSQHKNKDQAMKQMKAKLYELEMQKKNAEKQAMEDNKSDIGWGSQIRSYVLDDSRIKDLRTGVETRNTQAVLDGSLDQFIEASLKAGL.

Glutamine 252 carries the N5-methylglutamine modification.

The protein belongs to the prokaryotic/mitochondrial release factor family. Methylated by PrmC. Methylation increases the termination efficiency of RF2.

It localises to the cytoplasm. Its function is as follows. Peptide chain release factor 2 directs the termination of translation in response to the peptide chain termination codons UGA and UAA. The sequence is that of Peptide chain release factor 2 from Escherichia coli O9:H4 (strain HS).